Consider the following 157-residue polypeptide: Electron transfer flavoprotein regulatory factor 1 homolog (157 aa).

Belongs to the complex I LYR family.

It localises to the mitochondrion. The polypeptide is Electron transfer flavoprotein regulatory factor 1 homolog (Dictyostelium discoideum (Social amoeba)).